We begin with the raw amino-acid sequence, 298 residues long: Large ribosomal subunit protein uL18 (298 aa).

Belongs to the universal ribosomal protein uL18 family. As to quaternary structure, component of the large ribosomal subunit. Mature ribosomes consist of a small (40S) and a large (60S) subunit. The 40S subunit contains about 32 different proteins and 1 molecule of RNA (18S). The 60S subunit contains 45 different proteins and 3 molecules of RNA (25S, 5.8S and 5S).

Its subcellular location is the cytoplasm. Its function is as follows. Component of the ribosome, a large ribonucleoprotein complex responsible for the synthesis of proteins in the cell. The small ribosomal subunit (SSU) binds messenger RNAs (mRNAs) and translates the encoded message by selecting cognate aminoacyl-transfer RNA (tRNA) molecules. The large subunit (LSU) contains the ribosomal catalytic site termed the peptidyl transferase center (PTC), which catalyzes the formation of peptide bonds, thereby polymerizing the amino acids delivered by tRNAs into a polypeptide chain. The nascent polypeptides leave the ribosome through a tunnel in the LSU and interact with protein factors that function in enzymatic processing, targeting, and the membrane insertion of nascent chains at the exit of the ribosomal tunnel. The protein is Large ribosomal subunit protein uL18 of Candida albicans (strain SC5314 / ATCC MYA-2876) (Yeast).